The sequence spans 334 residues: MLNVVIVGASGYAGAELVNYMHRHRFANIKKIFVSKNSLNIDKLFSDVHQQFKNIVDLRFDTIRNCTLIKKNIDAVFLATDHRVSHSLVPFFLSSNCIVFDLSASYRMNNKKVYLDYYGFVHEYEELLKNSVYGLAEWEQEKIKKANLIALPGCYATCIQLALKPLIKENVLCDKNIPIINAISGVSGAGRKASLNNSFCEVSLQPYNIFTHRHTPEIIEKLGVPVIFIPHLGPFSRGIIATITCKLKPNVKSIDIHNIFNKFYKNKPLIRIYKKYLPSIKSVEKQPFCDIGFVIKDDYIVIVAAEDNLLKGAAAQAVQCFNVRFGFSETESII.

Cys154 is an active-site residue.

The protein belongs to the NAGSA dehydrogenase family. Type 1 subfamily.

The protein resides in the cytoplasm. It carries out the reaction N-acetyl-L-glutamate 5-semialdehyde + phosphate + NADP(+) = N-acetyl-L-glutamyl 5-phosphate + NADPH + H(+). It participates in amino-acid biosynthesis; L-arginine biosynthesis; N(2)-acetyl-L-ornithine from L-glutamate: step 3/4. Catalyzes the NADPH-dependent reduction of N-acetyl-5-glutamyl phosphate to yield N-acetyl-L-glutamate 5-semialdehyde. The sequence is that of N-acetyl-gamma-glutamyl-phosphate reductase from Buchnera aphidicola subsp. Acyrthosiphon pisum (strain 5A).